A 279-amino-acid polypeptide reads, in one-letter code: 4-hydroxy-3-methylbut-2-enyl diphosphate reductase (279 aa).

Cysteine 12 serves as a coordination point for [4Fe-4S] cluster. 2 residues coordinate (2E)-4-hydroxy-3-methylbut-2-enyl diphosphate: histidine 42 and histidine 74. Residues histidine 42 and histidine 74 each coordinate dimethylallyl diphosphate. Isopentenyl diphosphate is bound by residues histidine 42 and histidine 74. Cysteine 96 provides a ligand contact to [4Fe-4S] cluster. Position 124 (histidine 124) interacts with (2E)-4-hydroxy-3-methylbut-2-enyl diphosphate. Histidine 124 lines the dimethylallyl diphosphate pocket. Histidine 124 is a binding site for isopentenyl diphosphate. The active-site Proton donor is the glutamate 126. Threonine 162 provides a ligand contact to (2E)-4-hydroxy-3-methylbut-2-enyl diphosphate. Residue cysteine 190 coordinates [4Fe-4S] cluster. 4 residues coordinate (2E)-4-hydroxy-3-methylbut-2-enyl diphosphate: serine 218, serine 219, asparagine 220, and serine 263. Positions 218, 219, 220, and 263 each coordinate dimethylallyl diphosphate. Isopentenyl diphosphate is bound by residues serine 218, serine 219, asparagine 220, and serine 263.

It belongs to the IspH family. [4Fe-4S] cluster serves as cofactor.

It catalyses the reaction isopentenyl diphosphate + 2 oxidized [2Fe-2S]-[ferredoxin] + H2O = (2E)-4-hydroxy-3-methylbut-2-enyl diphosphate + 2 reduced [2Fe-2S]-[ferredoxin] + 2 H(+). The enzyme catalyses dimethylallyl diphosphate + 2 oxidized [2Fe-2S]-[ferredoxin] + H2O = (2E)-4-hydroxy-3-methylbut-2-enyl diphosphate + 2 reduced [2Fe-2S]-[ferredoxin] + 2 H(+). The protein operates within isoprenoid biosynthesis; dimethylallyl diphosphate biosynthesis; dimethylallyl diphosphate from (2E)-4-hydroxy-3-methylbutenyl diphosphate: step 1/1. It participates in isoprenoid biosynthesis; isopentenyl diphosphate biosynthesis via DXP pathway; isopentenyl diphosphate from 1-deoxy-D-xylulose 5-phosphate: step 6/6. Functionally, catalyzes the conversion of 1-hydroxy-2-methyl-2-(E)-butenyl 4-diphosphate (HMBPP) into a mixture of isopentenyl diphosphate (IPP) and dimethylallyl diphosphate (DMAPP). Acts in the terminal step of the DOXP/MEP pathway for isoprenoid precursor biosynthesis. The protein is 4-hydroxy-3-methylbut-2-enyl diphosphate reductase of Alkaliphilus oremlandii (strain OhILAs) (Clostridium oremlandii (strain OhILAs)).